A 321-amino-acid polypeptide reads, in one-letter code: Outer envelope protein 36, chloroplastic (321 aa).

Belongs to the OEP80 (TC 1.B.33.2) family. Expressed in germinating seeds.

It localises to the plastid. The protein resides in the chloroplast outer membrane. In terms of biological role, may play a role during plastid development. In Arabidopsis thaliana (Mouse-ear cress), this protein is Outer envelope protein 36, chloroplastic.